The chain runs to 263 residues: Endonuclease 8 (263 aa).

The active-site Schiff-base intermediate with DNA is P2. Residue E3 is the Proton donor of the active site. K53 (proton donor; for beta-elimination activity) is an active-site residue. The DNA site is built by Q70, R125, and N169. The FPG-type zinc finger occupies 229–263 (KVFHRDGELCERCGGIIEKTTLSSRPFYWCPGCQH). The active-site Proton donor; for delta-elimination activity is the R253.

It belongs to the FPG family. It depends on Zn(2+) as a cofactor.

It catalyses the reaction 2'-deoxyribonucleotide-(2'-deoxyribose 5'-phosphate)-2'-deoxyribonucleotide-DNA = a 3'-end 2'-deoxyribonucleotide-(2,3-dehydro-2,3-deoxyribose 5'-phosphate)-DNA + a 5'-end 5'-phospho-2'-deoxyribonucleoside-DNA + H(+). In terms of biological role, involved in base excision repair of DNA damaged by oxidation or by mutagenic agents. Acts as a DNA glycosylase that recognizes and removes damaged bases. Has a preference for oxidized pyrimidines, such as thymine glycol, 5,6-dihydrouracil and 5,6-dihydrothymine. Has AP (apurinic/apyrimidinic) lyase activity and introduces nicks in the DNA strand. Cleaves the DNA backbone by beta-delta elimination to generate a single-strand break at the site of the removed base with both 3'- and 5'-phosphates. The polypeptide is Endonuclease 8 (Shigella dysenteriae serotype 1 (strain Sd197)).